The primary structure comprises 97 residues: Large ribosomal subunit protein bL31 (97 aa).

The interval 75–97 (NKTKKSNQAKVEKQTRHRSINEL) is disordered. A compositionally biased stretch (basic and acidic residues) spans 84 to 97 (KVEKQTRHRSINEL).

This sequence belongs to the bacterial ribosomal protein bL31 family. Type A subfamily. In terms of assembly, part of the 50S ribosomal subunit.

Its function is as follows. Binds the 23S rRNA. This is Large ribosomal subunit protein bL31 from Mycoplasma genitalium (strain ATCC 33530 / DSM 19775 / NCTC 10195 / G37) (Mycoplasmoides genitalium).